The primary structure comprises 589 residues: Serine/threonine-protein kinase PknJ (589 aa).

At 1 to 342 the chain is on the cytoplasmic side; that stretch reads MAHELSAGSV…LPRRPRRYRR (342 aa). Residues 14–276 form the Protein kinase domain; sequence YRIERMLGAG…SAGEFAHAAA (263 aa). ATP is bound by residues 20-28 and K43; that span reads LGAGGMGTV. The active-site Proton acceptor is the D136. A helical transmembrane segment spans residues 343–363; sequence GVAAVAAVMVVAAAAVTAVTM. Topologically, residues 364–589 are extracellular; sequence TSHQPRTATP…TNYILAKIPG (226 aa). The span at 365 to 387 shows a compositional bias: low complexity; it reads SHQPRTATPPSAAALSPTSSSTT. Residues 365–400 are disordered; sequence SHQPRTATPPSAAALSPTSSSTTPPQPPIVTRSRLP.

This sequence belongs to the protein kinase superfamily. Ser/Thr protein kinase family. In terms of assembly, homodimer.

Its subcellular location is the cell membrane. The catalysed reaction is L-seryl-[protein] + ATP = O-phospho-L-seryl-[protein] + ADP + H(+). It carries out the reaction L-threonyl-[protein] + ATP = O-phospho-L-threonyl-[protein] + ADP + H(+). This chain is Serine/threonine-protein kinase PknJ (pknJ), found in Mycobacterium bovis (strain ATCC BAA-935 / AF2122/97).